The chain runs to 207 residues: LexA repressor (207 aa).

The segment at residues 28-48 (VREIGEAVGLASSSTVHGHLA) is a DNA-binding region (H-T-H motif). Active-site for autocatalytic cleavage activity residues include Ser-129 and Lys-167.

It belongs to the peptidase S24 family. In terms of assembly, homodimer.

It carries out the reaction Hydrolysis of Ala-|-Gly bond in repressor LexA.. Represses a number of genes involved in the response to DNA damage (SOS response), including recA and lexA. In the presence of single-stranded DNA, RecA interacts with LexA causing an autocatalytic cleavage which disrupts the DNA-binding part of LexA, leading to derepression of the SOS regulon and eventually DNA repair. This chain is LexA repressor, found in Geobacillus thermodenitrificans (strain NG80-2).